Reading from the N-terminus, the 21-residue chain is Paulistine (21 aa).

Cys-7 and Cys-14 form a disulfide bridge. A Threonine amide modification is found at Thr-21.

Belongs to the sylv/frat/paul family. In terms of processing, occurs in oxidized and reduced states which are thought to adopt a compact globular and linear structure, respectively.

Its function is as follows. Induces transient hyperalgesia and paw edema in mice. Probably exerts its effects via different pathways in an oxidation state-dependent way. This Polybia paulista (Neotropical social wasp) protein is Paulistine.